A 268-amino-acid polypeptide reads, in one-letter code: Proteasome subunit beta type-4 (268 aa).

It belongs to the peptidase T1B family. In terms of assembly, the 26S proteasome consists of a 20S proteasome core and two 19S regulatory subunits. The 20S proteasome core is composed of 28 subunits that are arranged in four stacked rings, resulting in a barrel-shaped structure. The two end rings are each formed by seven alpha subunits, and the two central rings are each formed by seven beta subunits. The catalytic chamber with the active sites is on the inside of the barrel.

It localises to the cytoplasm. The protein localises to the nucleus. Functionally, non-catalytic component of the proteasome, a multicatalytic proteinase complex which is characterized by its ability to cleave peptides with Arg, Phe, Tyr, Leu, and Glu adjacent to the leaving group at neutral or slightly basic pH. The proteasome has an ATP-dependent proteolytic activity. The polypeptide is Proteasome subunit beta type-4 (Prosbeta7) (Drosophila melanogaster (Fruit fly)).